Reading from the N-terminus, the 809-residue chain is Quinate/shikimate dehydrogenase (quinone) (809 aa).

A run of 5 helical transmembrane segments spans residues 14 to 34 (VWCF…VIGG), 41 to 61 (GGSW…FFMF), 68 to 88 (VWLY…DAGF), 90 to 110 (FWPL…VMLT), and 127 to 147 (AYVI…GMFI).

It belongs to the bacterial PQQ dehydrogenase family. It depends on pyrroloquinoline quinone as a cofactor.

It is found in the cell membrane. The catalysed reaction is L-quinate + a quinone = 3-dehydroquinate + a quinol. The enzyme catalyses shikimate + a quinone = 3-dehydroshikimate + a quinol. Its pathway is aromatic compound metabolism; 3,4-dihydroxybenzoate biosynthesis; 3-dehydroquinate from D-quinate (PQQ route): step 1/1. Functionally, can act either on quinate or on shikimate. This is Quinate/shikimate dehydrogenase (quinone) (quiA) from Acinetobacter baylyi (strain ATCC 33305 / BD413 / ADP1).